The following is a 415-amino-acid chain: Gamma-glutamyl phosphate reductase (415 aa).

It belongs to the gamma-glutamyl phosphate reductase family.

Its subcellular location is the cytoplasm. The enzyme catalyses L-glutamate 5-semialdehyde + phosphate + NADP(+) = L-glutamyl 5-phosphate + NADPH + H(+). It functions in the pathway amino-acid biosynthesis; L-proline biosynthesis; L-glutamate 5-semialdehyde from L-glutamate: step 2/2. Functionally, catalyzes the NADPH-dependent reduction of L-glutamate 5-phosphate into L-glutamate 5-semialdehyde and phosphate. The product spontaneously undergoes cyclization to form 1-pyrroline-5-carboxylate. This Bacillus cereus (strain B4264) protein is Gamma-glutamyl phosphate reductase.